The chain runs to 207 residues: Large ribosomal subunit protein uL4 (207 aa).

The disordered stretch occupies residues 56–76 (EVRGGGRKPWRQKGTGRARAG). The span at 60–71 (GGRKPWRQKGTG) shows a compositional bias: basic residues.

The protein belongs to the universal ribosomal protein uL4 family. As to quaternary structure, part of the 50S ribosomal subunit.

Its function is as follows. One of the primary rRNA binding proteins, this protein initially binds near the 5'-end of the 23S rRNA. It is important during the early stages of 50S assembly. It makes multiple contacts with different domains of the 23S rRNA in the assembled 50S subunit and ribosome. In terms of biological role, forms part of the polypeptide exit tunnel. In Desulfitobacterium hafniense (strain Y51), this protein is Large ribosomal subunit protein uL4.